A 145-amino-acid chain; its full sequence is D-aminoacyl-tRNA deacylase (145 aa).

The Gly-cisPro motif, important for rejection of L-amino acids signature appears at 137–138 (GP).

The protein belongs to the DTD family. Homodimer.

It localises to the cytoplasm. It carries out the reaction glycyl-tRNA(Ala) + H2O = tRNA(Ala) + glycine + H(+). The enzyme catalyses a D-aminoacyl-tRNA + H2O = a tRNA + a D-alpha-amino acid + H(+). In terms of biological role, an aminoacyl-tRNA editing enzyme that deacylates mischarged D-aminoacyl-tRNAs. Also deacylates mischarged glycyl-tRNA(Ala), protecting cells against glycine mischarging by AlaRS. Acts via tRNA-based rather than protein-based catalysis; rejects L-amino acids rather than detecting D-amino acids in the active site. By recycling D-aminoacyl-tRNA to D-amino acids and free tRNA molecules, this enzyme counteracts the toxicity associated with the formation of D-aminoacyl-tRNA entities in vivo and helps enforce protein L-homochirality. The polypeptide is D-aminoacyl-tRNA deacylase (Streptomyces avermitilis (strain ATCC 31267 / DSM 46492 / JCM 5070 / NBRC 14893 / NCIMB 12804 / NRRL 8165 / MA-4680)).